A 436-amino-acid chain; its full sequence is Probable mediator of RNA polymerase II transcription subunit 26b (436 aa).

Residues 71–111 (PGDDEANRGTTGNGGGGTAVDEDYEVAGGSKESKANSSRGD) form a disordered region. The TFIIS N-terminal domain occupies 139–214 (KEVARIKEIL…AEWKELVDQW (76 aa)). A disordered region spans residues 263-376 (HFFDSLDFDG…PQQEKLKGLD (114 aa)). Composition is skewed to basic and acidic residues over residues 276-290 (NSEE…ERRP) and 332-350 (TEQR…EKPM). Positions 382-402 (EFAKRKLQESYQHHENAKKQR) form a coiled coil. The disordered stretch occupies residues 408-436 (EMIPKQGSAQKPQLKRPGMSNRNWANGRK). A compositionally biased stretch (polar residues) spans 427 to 436 (SNRNWANGRK).

This sequence belongs to the Mediator complex subunit 26 family. As to quaternary structure, component of the Mediator complex.

The protein resides in the nucleus. In terms of biological role, component of the Mediator complex, a coactivator involved in the regulated transcription of nearly all RNA polymerase II-dependent genes. Mediator functions as a bridge to convey information from gene-specific regulatory proteins to the basal RNA polymerase II transcription machinery. The Mediator complex, having a compact conformation in its free form, is recruited to promoters by direct interactions with regulatory proteins and serves for the assembly of a functional preinitiation complex with RNA polymerase II and the general transcription factors. May play a role in transcription elongation. The sequence is that of Probable mediator of RNA polymerase II transcription subunit 26b (MED26B) from Arabidopsis thaliana (Mouse-ear cress).